We begin with the raw amino-acid sequence, 367 residues long: Chorismate synthase (367 aa).

Arginine 48 and arginine 54 together coordinate NADP(+). FMN-binding positions include 125–127 (RSS), 238–239 (NA), glycine 278, 293–297 (KPTSS), and arginine 319.

It belongs to the chorismate synthase family. As to quaternary structure, homotetramer. Requires FMNH2 as cofactor.

It carries out the reaction 5-O-(1-carboxyvinyl)-3-phosphoshikimate = chorismate + phosphate. The protein operates within metabolic intermediate biosynthesis; chorismate biosynthesis; chorismate from D-erythrose 4-phosphate and phosphoenolpyruvate: step 7/7. In terms of biological role, catalyzes the anti-1,4-elimination of the C-3 phosphate and the C-6 proR hydrogen from 5-enolpyruvylshikimate-3-phosphate (EPSP) to yield chorismate, which is the branch point compound that serves as the starting substrate for the three terminal pathways of aromatic amino acid biosynthesis. This reaction introduces a second double bond into the aromatic ring system. The chain is Chorismate synthase from Stenotrophomonas maltophilia (strain K279a).